A 146-amino-acid polypeptide reads, in one-letter code: Hemoglobin subunit beta (146 aa).

An N-acetylvaline modification is found at Val1. The Globin domain occupies 2-146 (HLTGEEKAAV…VATALAHKYH (145 aa)). A Phosphothreonine modification is found at Thr12. At Ser44 the chain carries Phosphoserine. Position 59 is an N6-acetyllysine (Lys59). Residue His63 coordinates heme b. Lys82 carries the N6-acetyllysine modification. His92 lines the heme b pocket. An S-nitrosocysteine modification is found at Cys93. N6-acetyllysine is present on Lys144.

Belongs to the globin family. As to quaternary structure, heterotetramer of two alpha chains and two beta chains. In terms of tissue distribution, red blood cells.

Involved in oxygen transport from the lung to the various peripheral tissues. This chain is Hemoglobin subunit beta (HBB), found in Macroderma gigas (Australian ghost bat).